Consider the following 422-residue polypeptide: Imidazolonepropionase (422 aa).

2 residues coordinate Fe(3+): H82 and H84. Residues H82 and H84 each contribute to the Zn(2+) site. 4-imidazolone-5-propanoate is bound by residues R91, Y154, and H187. Y154 is an N-formimidoyl-L-glutamate binding site. Residue H252 coordinates Fe(3+). Zn(2+) is bound at residue H252. E255 lines the 4-imidazolone-5-propanoate pocket. A Fe(3+)-binding site is contributed by D327. Zn(2+) is bound at residue D327. N329 and G331 together coordinate N-formimidoyl-L-glutamate. S332 lines the 4-imidazolone-5-propanoate pocket.

The protein belongs to the metallo-dependent hydrolases superfamily. HutI family. The cofactor is Zn(2+). Fe(3+) is required as a cofactor.

It is found in the cytoplasm. The catalysed reaction is 4-imidazolone-5-propanoate + H2O = N-formimidoyl-L-glutamate. Its pathway is amino-acid degradation; L-histidine degradation into L-glutamate; N-formimidoyl-L-glutamate from L-histidine: step 3/3. Catalyzes the hydrolytic cleavage of the carbon-nitrogen bond in imidazolone-5-propanoate to yield N-formimidoyl-L-glutamate. It is the third step in the universal histidine degradation pathway. In Alkaliphilus metalliredigens (strain QYMF), this protein is Imidazolonepropionase.